The sequence spans 116 residues: Iron-sulfur cluster insertion protein ErpA (116 aa).

Iron-sulfur cluster-binding residues include cysteine 44, cysteine 108, and cysteine 110.

Belongs to the HesB/IscA family. In terms of assembly, homodimer. The cofactor is iron-sulfur cluster.

Required for insertion of 4Fe-4S clusters for at least IspG. The sequence is that of Iron-sulfur cluster insertion protein ErpA from Aeromonas salmonicida (strain A449).